Here is a 331-residue protein sequence, read N- to C-terminus: MSTKEKLISHVMKEEPVGSRNKVTVVGVGMVGMASAISILLKDLCDELAMVDVMEDKLKGEVMDLQHGSLFLKTKIVGDKDYSVTANSKVVVVTAGARQQEGESRLNLVQRNVNIFKFIIPNIVKYSPNCILMVVSNPVDILTYVAWKLSGFPRHRVIGSGTNLDSARFRHLIGEKLHLHPSSCHAWIVGEHGDSSVPVWSGVNVAGVSLQGLNPQMGTEGDGENWKAIHKEVVDGAYEVIKLKGYTSWAIGMSVADLVESIIKNMHKVHPVSTLVQGMHGVKDEVFLSVPCVLGNSGLTDVIHMTLKAEEEKQLQKSAETLWGVQKELTL.

Residues 29 to 57 (GMVGMASAISILLKDLCDELAMVDVMEDK) and Arg-98 contribute to the NAD(+) site. 3 residues coordinate substrate: Arg-105, Asn-137, and Arg-168. Asn-137 is an NAD(+) binding site. Catalysis depends on His-192, which acts as the Proton acceptor. Residue Thr-247 participates in substrate binding.

The protein belongs to the LDH/MDH superfamily. LDH family. As to quaternary structure, homotetramer.

It is found in the cytoplasm. The enzyme catalyses (S)-lactate + NAD(+) = pyruvate + NADH + H(+). It participates in fermentation; pyruvate fermentation to lactate; (S)-lactate from pyruvate: step 1/1. In terms of biological role, interconverts simultaneously and stereospecifically pyruvate and lactate with concomitant interconversion of NADH and NAD(+). The protein is L-lactate dehydrogenase A chain (ldha) of Chaenocephalus aceratus (Blackfin icefish).